A 967-amino-acid chain; its full sequence is Protein moonraker (967 aa).

The disordered stretch occupies residues 178-201 (SHPGQSDLTVPNSPPTHDPGLQPH). The segment covering 179-188 (HPGQSDLTVP) has biased composition (polar residues). Residues S287 and S409 each carry the phosphoserine modification. Disordered regions lie at residues 401–431 (ALER…SRPS) and 490–601 (KAGK…SHLT). Positions 525-543 (QSQPHSKSRVQQTTVSSRL) are enriched in polar residues. The span at 557-568 (WIPPNPTSPPAS) shows a compositional bias: pro residues. A coiled-coil region spans residues 616 to 642 (AETSKRLKELEELKAKEIDSMQKQRLD). Residues S700 and S826 each carry the phosphoserine modification. Residues 849–872 (RPCNGNSLDESVGTEEGSEKREAP) are disordered. The segment at 885–967 (GRAPLFVPPG…FTSEFLEAAT (83 aa)) is necessary and sufficient for CEP20-binding.

As to quaternary structure, interacts with CEP63. Interacts with WDR62. Forms a complex with OFD1 and CEP20/FOR20. Interacts with PCM1.

Its subcellular location is the cytoplasm. The protein resides in the cytoskeleton. It is found in the microtubule organizing center. The protein localises to the centrosome. It localises to the centriole. Its subcellular location is the centriolar satellite. Functionally, involved in centriole duplication. Positively regulates CEP63 centrosomal localization. Required for WDR62 centrosomal localization and promotes the centrosomal localization of CDK2. May play a role in cilium assembly. The chain is Protein moonraker (KIAA0753) from Homo sapiens (Human).